The following is a 233-amino-acid chain: Protein FAM204A (233 aa).

Disordered regions lie at residues 1-57 (MWSG…PSTE) and 79-127 (KFQE…ETQW). Residues 13 to 24 (SDVELNSDDDTT) show a composition bias toward acidic residues. Residues 34 to 46 (EGKEDGTFEKTEM) are compositionally biased toward basic and acidic residues. Basic residues predominate over residues 98–109 (EKKKRKRSRKGK). Residues 144–164 (VKRKKVEKSGLEKRIDQAVEE) are a coiled coil.

The polypeptide is Protein FAM204A (FAM204A) (Bos taurus (Bovine)).